We begin with the raw amino-acid sequence, 42 residues long: Photosystem I reaction center subunit IX (42 aa).

A helical membrane pass occupies residues 7–27 (YLSVAPVLSTLWFGALAGLLI).

Belongs to the PsaJ family.

It is found in the plastid. It localises to the chloroplast thylakoid membrane. May help in the organization of the PsaE and PsaF subunits. The chain is Photosystem I reaction center subunit IX from Platanus occidentalis (Sycamore).